Here is a 183-residue protein sequence, read N- to C-terminus: Large ribosomal subunit protein eL18 (183 aa).

Residues 151–183 form a disordered region; that stretch reads HFGPAPGAPRSHTKPYVRSKGHEQAKPSRRSNV.

The protein belongs to the eukaryotic ribosomal protein eL18 family.

It localises to the cytoplasm. In Plutella xylostella (Diamondback moth), this protein is Large ribosomal subunit protein eL18 (RpL18).